Consider the following 106-residue polypeptide: Phosphoribosyl-ATP pyrophosphatase (106 aa).

Belongs to the PRA-PH family.

Its subcellular location is the cytoplasm. It carries out the reaction 1-(5-phospho-beta-D-ribosyl)-ATP + H2O = 1-(5-phospho-beta-D-ribosyl)-5'-AMP + diphosphate + H(+). Its pathway is amino-acid biosynthesis; L-histidine biosynthesis; L-histidine from 5-phospho-alpha-D-ribose 1-diphosphate: step 2/9. This Methylobacillus flagellatus (strain ATCC 51484 / DSM 6875 / VKM B-1610 / KT) protein is Phosphoribosyl-ATP pyrophosphatase.